The primary structure comprises 131 residues: Ribonuclease P protein component (131 aa).

Belongs to the RnpA family. Consists of a catalytic RNA component (M1 or rnpB) and a protein subunit.

It catalyses the reaction Endonucleolytic cleavage of RNA, removing 5'-extranucleotides from tRNA precursor.. RNaseP catalyzes the removal of the 5'-leader sequence from pre-tRNA to produce the mature 5'-terminus. It can also cleave other RNA substrates such as 4.5S RNA. The protein component plays an auxiliary but essential role in vivo by binding to the 5'-leader sequence and broadening the substrate specificity of the ribozyme. This Cyanothece sp. (strain PCC 7425 / ATCC 29141) protein is Ribonuclease P protein component.